Here is a 426-residue protein sequence, read N- to C-terminus: Kynureninase (426 aa).

Residues Leu110, Ser111, 138 to 141, Asp223, His226, and Tyr248 each bind pyridoxal 5'-phosphate; that span reads FPSD. Lys249 carries the post-translational modification N6-(pyridoxal phosphate)lysine. Residues Trp279 and Asn307 each contribute to the pyridoxal 5'-phosphate site.

The protein belongs to the kynureninase family. In terms of assembly, homodimer. The cofactor is pyridoxal 5'-phosphate.

It catalyses the reaction L-kynurenine + H2O = anthranilate + L-alanine + H(+). The enzyme catalyses 3-hydroxy-L-kynurenine + H2O = 3-hydroxyanthranilate + L-alanine + H(+). It participates in amino-acid degradation; L-kynurenine degradation; L-alanine and anthranilate from L-kynurenine: step 1/1. Its pathway is cofactor biosynthesis; NAD(+) biosynthesis; quinolinate from L-kynurenine: step 2/3. In terms of biological role, catalyzes the cleavage of L-kynurenine (L-Kyn) and L-3-hydroxykynurenine (L-3OHKyn) into anthranilic acid (AA) and 3-hydroxyanthranilic acid (3-OHAA), respectively. The protein is Kynureninase of Myxococcus xanthus (strain DK1622).